We begin with the raw amino-acid sequence, 192 residues long: NF-kappa-B inhibitor-interacting Ras-like protein 1 (192 aa).

11-18 contacts GTP; the sequence is GLLSVGKT. The Effector region signature appears at 35–43; the sequence is DCETLEDVY. The interactions with NFKBIA and NFKBIB stretch occupies residues 58–93; the sequence is HLYDTRGLQKGVELPKHYFSFADGFVLVYSVNNLES. Residues 61 to 65 and 120 to 123 each bind GTP; these read DTRGL and NKLD. Residues 168–192 form a disordered region; the sequence is LSQPQSKSSFPLPGRKNKGNSNPEN.

Belongs to the small GTPase superfamily. Ras family. KappaB-Ras subfamily. In terms of assembly, interacts with both NF-kappa-B inhibitor alpha (NFKBIA) and beta (NFKBIB) in vitro. However, it probably only interacts with NFKBIB in vivo. Forms a complex with NFKBIB and NF-kappa-B heterodimer (p50/NFKB1 and p65/RELA). Also interacts with c-Rel (REL).

The protein resides in the cytoplasm. Functionally, atypical Ras-like protein that acts as a potent regulator of NF-kappa-B activity by preventing the degradation of NF-kappa-B inhibitor beta (NFKBIB) by most signals, explaining why NFKBIB is more resistant to degradation. May act by blocking phosphorylation of NFKBIB and mediating cytoplasmic retention of p65/RELA NF-kappa-B subunit. It is unclear whether it acts as a GTPase. Both GTP- and GDP-bound forms block phosphorylation of NFKBIB. This Mus musculus (Mouse) protein is NF-kappa-B inhibitor-interacting Ras-like protein 1 (Nkiras1).